Reading from the N-terminus, the 297-residue chain is Light-independent protochlorophyllide reductase iron-sulfur ATP-binding protein (297 aa).

Residues 41-46 (GIGKST) and Lys70 contribute to the ATP site. Ser45 is a Mg(2+) binding site. Cys126 and Cys160 together coordinate [4Fe-4S] cluster. Residues 211–212 (NR) and 235–237 (PDL) each bind ATP.

Belongs to the NifH/BchL/ChlL family. In terms of assembly, homodimer. Protochlorophyllide reductase is composed of three subunits; BchL, BchN and BchB. The cofactor is [4Fe-4S] cluster.

It carries out the reaction chlorophyllide a + oxidized 2[4Fe-4S]-[ferredoxin] + 2 ADP + 2 phosphate = protochlorophyllide a + reduced 2[4Fe-4S]-[ferredoxin] + 2 ATP + 2 H2O. Its pathway is porphyrin-containing compound metabolism; bacteriochlorophyll biosynthesis (light-independent). In terms of biological role, component of the dark-operative protochlorophyllide reductase (DPOR) that uses Mg-ATP and reduced ferredoxin to reduce ring D of protochlorophyllide (Pchlide) to form chlorophyllide a (Chlide). This reaction is light-independent. The L component serves as a unique electron donor to the NB-component of the complex, and binds Mg-ATP. In Methylorubrum extorquens (strain PA1) (Methylobacterium extorquens), this protein is Light-independent protochlorophyllide reductase iron-sulfur ATP-binding protein.